The chain runs to 314 residues: MTASTIPRQIAIIGSGNIGTDLMIKVLRLSKTLEVGAMVGIDPDSDGLARANRLGVPTTSDGVDGLIRMPNFEAIDIVLDATSARAHAANYTALRRYRKRMIDLTPAAVGPFVVPAVNMGASLSADNVNMVTCGGQATIPIVAAISQVTPVAYAEIVASIASKSAGPGTRQNIDEFTETTAHAIEQVGGARKGKAIIILNPAEPPLIMRDTVLALIGPSDHDAVKGSIRAMVDAVAEYVPGYRLKQRIEIQPLDGLPVGTLTSEPVTHKVSVFLEVEGAAHYLPAYAGNLDIMTSAALRVAEAMAAQKLSGAVA.

Residue 15-18 (SGNI) coordinates NAD(+). The active-site Acyl-thioester intermediate is cysteine 133. Residues 164–172 (SAGPGTRQN) and asparagine 289 contribute to the NAD(+) site.

It belongs to the acetaldehyde dehydrogenase family.

It catalyses the reaction acetaldehyde + NAD(+) + CoA = acetyl-CoA + NADH + H(+). This chain is Acetaldehyde dehydrogenase 2, found in Nocardioides sp. (strain ATCC BAA-499 / JS614).